Reading from the N-terminus, the 474-residue chain is ATP synthase subunit beta (474 aa).

151-158 serves as a coordination point for ATP; it reads GGAGVGKT.

The protein belongs to the ATPase alpha/beta chains family. F-type ATPases have 2 components, CF(1) - the catalytic core - and CF(0) - the membrane proton channel. CF(1) has five subunits: alpha(3), beta(3), gamma(1), delta(1), epsilon(1). CF(0) has four main subunits: a(1), b(1), b'(1) and c(9-12).

It is found in the cell inner membrane. It carries out the reaction ATP + H2O + 4 H(+)(in) = ADP + phosphate + 5 H(+)(out). Functionally, produces ATP from ADP in the presence of a proton gradient across the membrane. The catalytic sites are hosted primarily by the beta subunits. In Jannaschia sp. (strain CCS1), this protein is ATP synthase subunit beta.